A 240-amino-acid chain; its full sequence is Inhibitor of growth protein 5 (240 aa).

At lysine 114 the chain carries N6-acetyllysine. The disordered stretch occupies residues 116–165 (EGSDFESSGGRGLKKGRGQKEKRGSRGRGRRTSEEDTPKKKKHKGGSEFT). At serine 118 the chain carries Phosphoserine. Position 126 is an omega-N-methylarginine (arginine 126). A PHD-type zinc finger spans residues 186 to 235 (PTYCLCHQVSYGEMIGCDNPDCPIEWFHFACVDLTTKPKGKWFCPRCVQE). Residues cysteine 189, cysteine 191, cysteine 202, cysteine 207, histidine 213, cysteine 216, cysteine 229, and cysteine 232 each contribute to the Zn(2+) site.

This sequence belongs to the ING family. Component of the HBO1 complex composed of KAT7/HBO1, MEAF6, ING5, and one scaffold subunit: complexes containing BRPF scaffold (BRPF1, BRD1/BRPF2 or BRPF3) direct KAT7/HBO1 specificity towards H3K14ac, while complexes containing JADE scaffold (JADE1, JADE2 and JADE3) mediate acetylation of histone H4. Component of the MOZ/MORF complex composed at least of ING5, KAT6A, KAT6B, MEAF6 and one of BRPF1, BRD1/BRPF2 and BRPF3. Interacts with H3K4me3 and to a lesser extent with H3K4me2. Interacts with EP300 and p53/TP53. Interacts with INCA1. Down-regulated in bone marrow cells in acute myeloid leukemia patients as compared with normal bone marrow cells.

It is found in the nucleus. It localises to the chromosome. In terms of biological role, component of the HBO1 complex, which specifically mediates acetylation of histone H3 at 'Lys-14' (H3K14ac) and, to a lower extent, acetylation of histone H4. Component of the MOZ/MORF complex which has a histone H3 acetyltransferase activity. Through chromatin acetylation it may regulate DNA replication and may function as a transcriptional coactivator. Inhibits cell growth, induces a delay in S-phase progression and enhances Fas-induced apoptosis in an INCA1-dependent manner. The polypeptide is Inhibitor of growth protein 5 (ING5) (Homo sapiens (Human)).